The chain runs to 267 residues: Serine/arginine-rich splicing factor 7 (267 aa).

Positions 40–113 (TKVYVGNLGT…SRVRVELSTG (74 aa)) constitute an RRM domain. Lysine 53 is modified (N6-acetyllysine; alternate). Residue lysine 53 forms a Glycyl lysine isopeptide (Lys-Gly) (interchain with G-Cter in SUMO2); alternate linkage. Phosphoserine is present on serine 61. Residues 110-127 (LSTGMPRRSRFDRPPARR) form a sufficient for interaction with NXF1 region. A CCHC-type zinc finger spans residues 133-150 (DRCYECGEKGHYAYDCHR). A compositionally biased stretch (basic residues) spans 152-209 (SRRRRSRSRSRSHSRSRGRRYSRSRSRSRGRRSRSASPRRSRSVSLRRSRSASLRRSR). Residues 152–267 (SRRRRSRSRS…HRSASPERMD (116 aa)) are disordered. Repeat copies occupy residues 182 to 189 (RRSRSASP), 190 to 197 (RRSRSVSL), 198 to 205 (RRSRSASL), and 206 to 213 (RRSRSGSI). The tract at residues 182 to 255 (RRSRSASPRR…SPKRSRSPSG (74 aa)) is 6 X 8 AA repeats of R-R-S-R-S-X-S-X. Phosphoserine occurs at positions 192, 194, and 196. Phosphoserine occurs at positions 210, 212, 221, 223, and 225. The span at 223–251 (SRSRSRSRSISRPRSSRSKSRSPSPKRSR) shows a compositional bias: basic residues. A 5; approximate repeat occupies 240–247 (SKSRSPSP). Residues 248-255 (KRSRSPSG) form a 6; approximate repeat. Phosphoserine occurs at positions 260 and 262.

The protein belongs to the splicing factor SR family. In terms of assembly, found in large molecular weight complexes containing CCNL1 and the p110 isoforms of either CDC2L1 or CDC2L2. Interacts with CCNL2 and CPSF6. Interacts with NXF1. Interacts with YTHDC1. Extensively phosphorylated on serine residues in the RS domain.

It localises to the nucleus. The protein localises to the cytoplasm. Required for pre-mRNA splicing. Represses the splicing of MAPT/Tau exon 10. May function as export adapter involved in mRNA nuclear export such as of histone H2A. Binds mRNA which is thought to be transferred to the NXF1-NXT1 heterodimer for export (TAP/NXF1 pathway); enhances NXF1-NXT1 RNA-binding activity. RNA-binding is semi-sequence specific. In Mus musculus (Mouse), this protein is Serine/arginine-rich splicing factor 7 (Srsf7).